A 33-amino-acid chain; its full sequence is Mu-theraphotoxin-Osp1a (33 aa).

3 disulfides stabilise this stretch: Cys-2–Cys-17, Cys-9–Cys-22, and Cys-16–Cys-29.

It belongs to the neurotoxin 10 (Hwtx-1) family. In terms of tissue distribution, expressed by the venom gland.

It localises to the secreted. Functionally, voltage-gated sodium channel Nav1.7/SCN9A inhibitor. This Orphnaecus sp. (strain Sibaliw/Philippines) (Tarantula spider) protein is Mu-theraphotoxin-Osp1a.